Reading from the N-terminus, the 249-residue chain is Probable hydroxyacylglutathione hydrolase ECU02_0580 (249 aa).

The Zn(2+) site is built by His75, His77, Asp79, His80, His126, Asp144, and His183. Residues 183–185 and 240–243 each bind substrate; these read HDY and RERK.

The protein belongs to the metallo-beta-lactamase superfamily. Glyoxalase II family. Requires Zn(2+) as cofactor.

It is found in the cytoplasm. Its subcellular location is the nucleus. It catalyses the reaction an S-(2-hydroxyacyl)glutathione + H2O = a 2-hydroxy carboxylate + glutathione + H(+). The protein operates within secondary metabolite metabolism; methylglyoxal degradation; (R)-lactate from methylglyoxal: step 2/2. Functionally, thiolesterase that catalyzes the hydrolysis of S-D-lactoyl-glutathione to form glutathione and D-lactic acid. The sequence is that of Probable hydroxyacylglutathione hydrolase ECU02_0580 from Encephalitozoon cuniculi (strain GB-M1) (Microsporidian parasite).